Reading from the N-terminus, the 524-residue chain is Adhesion G-protein coupled receptor G5 (524 aa).

Positions 1 to 23 are cleaved as a signal peptide; sequence MDPHGALFFYLCLLAAQVVLVET. The Extracellular segment spans residues 24 to 246; it reads LSDLLVLMKR…PAELQVPLEY (223 aa). N-linked (GlcNAc...) asparagine glycosylation is found at asparagine 58, asparagine 65, asparagine 96, asparagine 143, asparagine 169, and asparagine 175. In terms of domain architecture, GAIN-B spans 74 to 235; that stretch reads QSLVFKLSCD…AVLMQLSGDP (162 aa). 2 disulfide bridges follow: cysteine 185-cysteine 217 and cysteine 205-cysteine 219. Residues 185–235 are GPS; the sequence is CVFWKEGASKSSWGAWSPEGCYTEQPSATQVLCHCNHLTYFAVLMQLSGDP. Positions 224–232 are stachel; sequence YFAVLMQLS. Residues 247 to 267 traverse the membrane as a helical segment; it reads ISFVGCSISIVASLLTILLYA. Residues 268–284 lie on the Cytoplasmic side of the membrane; the sequence is QSRKQSDSTTRIHMNLN. The chain crosses the membrane as a helical span at residues 285 to 305; that stretch reads GSVLLLNVTFLLSSQMTLPTM. Residues 306–319 lie on the Extracellular side of the membrane; it reads PRPVCKVLAAVLHY. Cysteine 310 and cysteine 400 are joined by a disulfide. Residues 320–340 traverse the membrane as a helical segment; the sequence is ALLSSLTWMAIEGFNLYLFLG. Residues 341–351 are Cytoplasmic-facing; the sequence is RVYNAYIRRYL. Residues 352 to 372 traverse the membrane as a helical segment; it reads LKLCMLGWGFPALLVLLLLMI. The Extracellular segment spans residues 373-413; the sequence is KSSVYGPCVTSLSKSQENGTGFQNVSMCWIRSPMVHSILVM. N-linked (GlcNAc...) asparagine glycosylation is found at asparagine 390 and asparagine 396. A helical membrane pass occupies residues 414–434; the sequence is GYGGFTSLFNLVVLAWALWIL. Residues 435-453 are Cytoplasmic-facing; it reads CRLRAREKALSPWAYRDTA. A helical membrane pass occupies residues 454–476; it reads MVLGLTVLLGTTWTLAFFSFGVF. At 477–480 the chain is on the extracellular side; the sequence is LLPQ. A helical transmembrane segment spans residues 481 to 500; sequence LFLFTIFNSLYGFFLFLWFC. The Cytoplasmic portion of the chain corresponds to 501–524; that stretch reads SQKRYSDAEAKAEMEAVSSSQMTH.

This sequence belongs to the G-protein coupled receptor 2 family. Adhesion G-protein coupled receptor (ADGR) subfamily. In terms of assembly, heterodimer of 2 chains generated by proteolytic processing; the large extracellular N-terminal fragment and the membrane-bound C-terminal fragment predominantly remain associated and non-covalently linked. Post-translationally, autoproteolytically processed at the GPS region of the GAIN-B domain; this cleavage modulates receptor activity. In terms of tissue distribution, expressed at least in kidney, heart, brain and spleen. As to expression, isoform 1 is predominant in spleen. In the kidney, both isoform 1 and isoform 2 are expressed at similar levels. Isoform 2 is the major form in heart and brain. In the kidney, both isoform 1 and isoform 2 are expressed at similar levels.

Its subcellular location is the cell membrane. With respect to regulation, forms a heterodimer of 2 chains generated by proteolytic processing that remain associated through non-covalent interactions mediated by the GAIN-B domain. In the inactivated receptor, the Stachel sequence (also named stalk) is embedded in the GAIN-B domain, where it adopts a beta-strand conformation. On activation, the Stachel moves into the 7 transmembrane region and adopts a twisted hook-shaped configuration that forms contacts within the receptor, leading to coupling of a G-alpha protein, which activates signaling. The cleaved GAIN-B and N-terminal domains can then dissociate from the rest of the receptor. Its function is as follows. Orphan adhesion G-protein coupled receptor (aGPCR). Ligand binding causes a conformation change that triggers signaling via guanine nucleotide-binding proteins (G proteins) and modulates the activity of downstream effectors, such as adenylate cyclase. ADGRG5 is specifically coupled to G(s) G proteins and mediates activation of adenylate cyclase activity. Isoform 1, but not isoform 2, is constitutively active, as evidenced by elevated basal cAMP levels, and responds to mechanical activation (shaking). In Mus musculus (Mouse), this protein is Adhesion G-protein coupled receptor G5.